The primary structure comprises 71 residues: MIFKVFYQETIDEVPVREKTKTLYIEAESERDVRRKLQDRHINIEYIQPLEGAHLAYEQQNPDFHVLEIEQ.

Belongs to the RNA polymerase subunit epsilon family. As to quaternary structure, RNAP is composed of a core of 2 alpha, a beta and a beta' subunit. The core is associated with a delta subunit, and at least one of epsilon or omega. When a sigma factor is associated with the core the holoenzyme is formed, which can initiate transcription.

The enzyme catalyses RNA(n) + a ribonucleoside 5'-triphosphate = RNA(n+1) + diphosphate. Functionally, a non-essential component of RNA polymerase (RNAP). This Anoxybacillus flavithermus (strain DSM 21510 / WK1) protein is DNA-directed RNA polymerase subunit epsilon.